Reading from the N-terminus, the 82-residue chain is MPKADIHPTWYPEAKIICNGEVVMTVGSTQPEIHVEVWSGNHPFYTGTQKMIDTEGRIDRFQKRYGNLGKGGSKPNKKGDQK.

It belongs to the bacterial ribosomal protein bL31 family. Type A subfamily. In terms of assembly, part of the 50S ribosomal subunit.

Binds the 23S rRNA. The protein is Large ribosomal subunit protein bL31 of Rippkaea orientalis (strain PCC 8801 / RF-1) (Cyanothece sp. (strain PCC 8801)).